The following is a 341-amino-acid chain: Two-component response regulator ORR30 (341 aa).

The Response regulatory domain occupies 12 to 127 (RVLVIDDDCS…ELSNIWQHIF (116 aa)). 4-aspartylphosphate is present on D63. Residues 195-254 (DLGKSRLTWTTQLHRQFIAAVNHLGEDKAVPKKILGIMKVKHLTREQVASHLQKYRMQLK) form the HTH myb-type domain. The H-T-H motif DNA-binding region spans 225 to 250 (PKKILGIMKVKHLTREQVASHLQKYR).

This sequence belongs to the ARR family. Type-B subfamily. Two-component system major event consists of a His-to-Asp phosphorelay between a sensor histidine kinase (HK) and a response regulator (RR). In plants, the His-to-Asp phosphorelay involves an additional intermediate named Histidine-containing phosphotransfer protein (HPt). This multistep phosphorelay consists of a His-Asp-His-Asp sequential transfer of a phosphate group between first a His and an Asp of the HK protein, followed by the transfer to a conserved His of the HPt protein and finally the transfer to an Asp in the receiver domain of the RR protein.

The protein resides in the nucleus. Functionally, transcriptional activator that acts as a floral inducer to promote short-day (SD) flowering pathway. Activates HD3A and other FT-like genes independently from HD1. May also activate MADS-box transcription factors involved in flowering regulation. Functions as a response regulator involved in His-to-Asp phosphorelay signal transduction system. Phosphorylation of the Asp residue in the receiver domain activates the ability of the protein to promote the transcription of target genes. May directly activate some type-A response regulators in response to cytokinins. This chain is Two-component response regulator ORR30, found in Oryza sativa subsp. japonica (Rice).